A 171-amino-acid polypeptide reads, in one-letter code: UPF0398 protein STER_0279 (171 aa).

It belongs to the UPF0398 family.

The protein is UPF0398 protein STER_0279 of Streptococcus thermophilus (strain ATCC BAA-491 / LMD-9).